The sequence spans 199 residues: 3-isopropylmalate dehydratase small subunit (199 aa).

The protein belongs to the LeuD family. LeuD type 1 subfamily. Heterodimer of LeuC and LeuD.

The enzyme catalyses (2R,3S)-3-isopropylmalate = (2S)-2-isopropylmalate. It participates in amino-acid biosynthesis; L-leucine biosynthesis; L-leucine from 3-methyl-2-oxobutanoate: step 2/4. In terms of biological role, catalyzes the isomerization between 2-isopropylmalate and 3-isopropylmalate, via the formation of 2-isopropylmaleate. In Bacillus velezensis (strain DSM 23117 / BGSC 10A6 / LMG 26770 / FZB42) (Bacillus amyloliquefaciens subsp. plantarum), this protein is 3-isopropylmalate dehydratase small subunit.